Reading from the N-terminus, the 155-residue chain is SsrA-binding protein (155 aa).

Belongs to the SmpB family.

The protein localises to the cytoplasm. Required for rescue of stalled ribosomes mediated by trans-translation. Binds to transfer-messenger RNA (tmRNA), required for stable association of tmRNA with ribosomes. tmRNA and SmpB together mimic tRNA shape, replacing the anticodon stem-loop with SmpB. tmRNA is encoded by the ssrA gene; the 2 termini fold to resemble tRNA(Ala) and it encodes a 'tag peptide', a short internal open reading frame. During trans-translation Ala-aminoacylated tmRNA acts like a tRNA, entering the A-site of stalled ribosomes, displacing the stalled mRNA. The ribosome then switches to translate the ORF on the tmRNA; the nascent peptide is terminated with the 'tag peptide' encoded by the tmRNA and targeted for degradation. The ribosome is freed to recommence translation, which seems to be the essential function of trans-translation. The polypeptide is SsrA-binding protein (Lactococcus lactis subsp. lactis (strain IL1403) (Streptococcus lactis)).